We begin with the raw amino-acid sequence, 88 residues long: Phosphocarrier protein HPr (88 aa).

Residues 1 to 88 form the HPr domain; sequence MASKEFHIVV…ETMTKEGLAE (88 aa). His-15 (pros-phosphohistidine intermediate) is an active-site residue. Residue Ser-46 is modified to Phosphoserine; by HPrK/P.

It belongs to the HPr family.

Its subcellular location is the cytoplasm. Its activity is regulated as follows. Phosphorylation on Ser-46 inhibits the phosphoryl transfer from enzyme I to HPr. In terms of biological role, general (non sugar-specific) component of the phosphoenolpyruvate-dependent sugar phosphotransferase system (sugar PTS). This major carbohydrate active-transport system catalyzes the phosphorylation of incoming sugar substrates concomitantly with their translocation across the cell membrane. The phosphoryl group from phosphoenolpyruvate (PEP) is transferred to the phosphoryl carrier protein HPr by enzyme I. Phospho-HPr then transfers it to the PTS EIIA domain. Its function is as follows. P-Ser-HPr interacts with the catabolite control protein A (CcpA), forming a complex that binds to DNA at the catabolite response elements cre, operator sites preceding a large number of catabolite-regulated genes. Thus, P-Ser-HPr is a corepressor in carbon catabolite repression (CCR), a mechanism that allows bacteria to coordinate and optimize the utilization of available carbon sources. P-Ser-HPr also plays a role in inducer exclusion, in which it probably interacts with several non-PTS permeases and inhibits their transport activity. In Lactococcus lactis subsp. lactis (strain IL1403) (Streptococcus lactis), this protein is Phosphocarrier protein HPr (ptsH).